We begin with the raw amino-acid sequence, 248 residues long: NAD(P)H-quinone oxidoreductase subunit K (248 aa).

Residues Cys-66, Cys-67, Cys-131, and Cys-162 each coordinate [4Fe-4S] cluster.

Belongs to the complex I 20 kDa subunit family. NDH-1 can be composed of about 15 different subunits; different subcomplexes with different compositions have been identified which probably have different functions. Requires [4Fe-4S] cluster as cofactor.

The protein localises to the cellular thylakoid membrane. It catalyses the reaction a plastoquinone + NADH + (n+1) H(+)(in) = a plastoquinol + NAD(+) + n H(+)(out). The catalysed reaction is a plastoquinone + NADPH + (n+1) H(+)(in) = a plastoquinol + NADP(+) + n H(+)(out). Its function is as follows. NDH-1 shuttles electrons from an unknown electron donor, via FMN and iron-sulfur (Fe-S) centers, to quinones in the respiratory and/or the photosynthetic chain. The immediate electron acceptor for the enzyme in this species is believed to be plastoquinone. Couples the redox reaction to proton translocation, and thus conserves the redox energy in a proton gradient. Cyanobacterial NDH-1 also plays a role in inorganic carbon-concentration. The chain is NAD(P)H-quinone oxidoreductase subunit K from Synechococcus sp. (strain WH7803).